A 315-amino-acid polypeptide reads, in one-letter code: Homoserine O-succinyltransferase (315 aa).

C142 (acyl-thioester intermediate) is an active-site residue. Substrate is bound by residues K163 and S192. The active-site Proton acceptor is the H235. The active site involves E237. R249 contacts substrate. Basic and acidic residues predominate over residues 249 to 258 (RDCEKSDNAP). The interval 249–271 (RDCEKSDNAPKPENYFPDDDATK) is disordered.

Belongs to the MetA family.

Its subcellular location is the cytoplasm. The enzyme catalyses L-homoserine + succinyl-CoA = O-succinyl-L-homoserine + CoA. The protein operates within amino-acid biosynthesis; L-methionine biosynthesis via de novo pathway; O-succinyl-L-homoserine from L-homoserine: step 1/1. Transfers a succinyl group from succinyl-CoA to L-homoserine, forming succinyl-L-homoserine. This is Homoserine O-succinyltransferase from Pseudoalteromonas translucida (strain TAC 125).